The chain runs to 312 residues: Phosphate system positive regulatory protein PHO4 (312 aa).

The segment at 1-31 (MGRTTSEGIHGFVDDLEPKSSILDKVGDFIT) is interaction with PHO80. The tract at residues 35 to 71 (KRHDGREDFNEQNDELNSQENHNSSENGNENENEQDS) is disordered. Residues 49–62 (ELNSQENHNSSENG) show a composition bias toward low complexity. The 9aaTAD motif lies at 75–83 (DDLDRAFEL). The transcription activation domain stretch occupies residues 75 to 99 (DDLDRAFELVEGMDMDWMMPSHAHH). A phosphoserine; by PHO85 mark is found at serine 100, serine 114, serine 128, and serine 152. Polar residues-rich tracts occupy residues 138–154 (TTSA…SSPY) and 196–210 (PSNS…TAKT). Positions 138–259 (TTSANKVTKN…DKRESHKHAE (122 aa)) are disordered. A Nuclear localization signal motif is present at residues 140–166 (SANKVTKNKSNSSPYLNKRRGKPGPDS). The interaction with PHO80 stretch occupies residues 156-200 (NKRRGKPGPDSATSLFELPDSVIPTPKPKPKPKQYPKVILPSNST). The tract at residues 201–218 (RRVSPVTAKTSSSAEGVV) is interaction with PHO2. The involved in oligomerization stretch occupies residues 203-227 (VSPVTAKTSSSAEGVVVASESPVIA). A Phosphoserine modification is found at serine 204. Low complexity predominate over residues 211-235 (SSSAEGVVVASESPVIAPHGSSHSR). Serine 223 carries the post-translational modification Phosphoserine; by PHO85. Residues serine 242 and serine 243 each carry the phosphoserine modification. Positions 248–259 (DDDKRESHKHAE) are enriched in basic and acidic residues. In terms of domain architecture, bHLH spans 250-306 (DKRESHKHAEQARRNRLAVALHELASLIPAEWKQQNVSAAPSKATTVEAACRYIRHL).

As to quaternary structure, binds DNA as a homodimer. Interacts with transcription factor PHO2 and binds cooperatively to PHO5 UAS. Interacts with the cyclin-CDK PHO80-PHO85 and the CDK inhibitor (CKI) PHO81. In terms of processing, phosphorylated by the cyclin-CDK PHO80-PHO85 at five residues under high-phosphate conditions, preventing PHO4 from activating the structural PHO genes. Phosphorylation of Ser-114 and Ser-128 promotes nuclear export. Phosphorylation of Ser-152 decreases nuclear import. Phosphorylation of Ser-223 decreases the binding affinity for PHO2.

It localises to the cytoplasm. Its subcellular location is the nucleus. In terms of biological role, transcriptional activator that regulates the expression of repressible phosphatase under phosphate starvation conditions. Binds to the upstream activating sequence (UAS) of several phosphatase encoding PHO genes. Inhibited by the cyclin-CDK PHO80-PHO85 under high-phosphate conditions. This chain is Phosphate system positive regulatory protein PHO4 (PHO4), found in Saccharomyces cerevisiae (strain ATCC 204508 / S288c) (Baker's yeast).